Consider the following 470-residue polypeptide: Cysteine--tRNA ligase (470 aa).

C46 lines the Zn(2+) pocket. Positions 48 to 58 match the 'HIGH' region motif; that stretch reads PTVYDLAHIGN. Zn(2+) contacts are provided by C230, H255, and E259. The 'KMSKS' region signature appears at 288–292; the sequence is KMSKS. K291 lines the ATP pocket.

Belongs to the class-I aminoacyl-tRNA synthetase family. As to quaternary structure, monomer. The cofactor is Zn(2+).

It is found in the cytoplasm. It catalyses the reaction tRNA(Cys) + L-cysteine + ATP = L-cysteinyl-tRNA(Cys) + AMP + diphosphate. This is Cysteine--tRNA ligase from Granulibacter bethesdensis (strain ATCC BAA-1260 / CGDNIH1).